Reading from the N-terminus, the 358-residue chain is WD repeat-containing protein 53 (358 aa).

WD repeat units follow at residues 8–46 (GHSS…LGHT), 92–131 (VNEE…ISRS), 134–174 (RHSN…PLWI), 195–234 (LNPA…CEQE), and 239–278 (GHSL…EKKH). Over residues 278–294 (HKSPTKHTHRKKTKRAA) the composition is skewed to basic residues. The tract at residues 278-309 (HKSPTKHTHRKKTKRAAYTKQGGGTHASVTGE) is disordered.

This sequence belongs to the WD repeat WDR53 family.

The protein is WD repeat-containing protein 53 (WDR53) of Bos taurus (Bovine).